The sequence spans 292 residues: Phosphoribosylaminoimidazole-succinocarboxamide synthase (292 aa).

It belongs to the SAICAR synthetase family.

The enzyme catalyses 5-amino-1-(5-phospho-D-ribosyl)imidazole-4-carboxylate + L-aspartate + ATP = (2S)-2-[5-amino-1-(5-phospho-beta-D-ribosyl)imidazole-4-carboxamido]succinate + ADP + phosphate + 2 H(+). It functions in the pathway purine metabolism; IMP biosynthesis via de novo pathway; 5-amino-1-(5-phospho-D-ribosyl)imidazole-4-carboxamide from 5-amino-1-(5-phospho-D-ribosyl)imidazole-4-carboxylate: step 1/2. The chain is Phosphoribosylaminoimidazole-succinocarboxamide synthase from Elusimicrobium minutum (strain Pei191).